Here is a 101-residue protein sequence, read N- to C-terminus: STAS-domain containing protein PA14_20770 (101 aa).

Residues 14–101 form the STAS domain; it reads LTIQIQGRFD…SNFEQLFKIS (88 aa).

In terms of processing, phosphorylated on a serine residue, possibly on Ser-56.

It localises to the secreted. This chain is STAS-domain containing protein PA14_20770, found in Pseudomonas aeruginosa (strain UCBPP-PA14).